A 1038-amino-acid chain; its full sequence is MPPPPHIKPENVLKRAQELIAVGQAPAALNVLHEHVTSKRTRSSPIVSLEPVMLLFVELCVDLRKGKAAKDGLYQYKNIAQNTNVATIEVVLKKFIELAEKKVTEAQAKADEIQSSLESAAPSSNVEDLEAIETPETILLATVSGEQSRDRTDRAVVTPWLKFLWETYRTVLEILKNNARLEVMYQTTALQAFQFCLKYTRKTEFRRLCELLRNHVQNAAKYSAQMHAINLSDPDTLQRHLDTRFQQLNVAVELELWQEAFRSIEDIHTLLSLSKRPAKNVMMANYYEKLARIFLVSENYLFHAAAWSRYYNLLRQSAATLAAGQGTKKENPSVTDADMTKAVSFVLLSALAIPVISTSRSRGALVDVDEVRKNKNTRLTNLLGMAQSPTRAVLFKDALNKGLLKRARPEIRDLYNILEVDFHPLSICKKITPILKQIGADPEMEKYVVPLQQVILTRLFQQLSQVYESVSLKFVYELAQFPDPFQVTPAMIEKFIMNGCKKGDLAIRVDHISGVLTFDTDVFSSAKALHSGSAAGSAESEVGSVQRMQNTPAEIARLQLTRLAKTLHVSCMYVDPSYHEARLQAKQAAQTRAAAGAAKEHEETLARRVIIDKKKEAATDALQRKQREEETRKRIRTQQLQEAEKQRLLDEQREREKKRIKDEQDRIREQELKKQIEELKSGVKGIDLSEVDLKDLDANRLRAMKLAQLEKEKNELNDRIRTTGKRIDHLERAFRREELKHIPADYEAQKKRDMELYEALKAETLKEAEDKHKEAVALKHRLSRLVPVFNNFRKEVSEKRHEEFERRRKAAERDFEAKKKQRIKEVQDRRRRERAEREEAERRQKEEEERIKREEEERAAKEEERRRVLAEEKAKREEERKKLDEIALKQKQREEEAEARRASRKTGFPEPPARAEPERTAPRLNLAPRTGGGPSWRERQAAKEAAGGAAPEPAKEEPAAQPPRRTGGYVPPHLRGASAAAPAAPPSNGAAPSRYVPPSARDSGSSTPPSRTQTPATTSEEPKSAGKWVPRWKQQQGQ.

The stretch at 92-121 forms a coiled coil; the sequence is LKKFIELAEKKVTEAQAKADEIQSSLESAA. One can recognise a PCI domain in the interval 339-523; the sequence is MTKAVSFVLL…GVLTFDTDVF (185 aa). Residues 611–899 are a coiled coil; it reads IDKKKEAATD…QKQREEEAEA (289 aa). Composition is skewed to basic and acidic residues over residues 621-632 and 800-901; these read ALQRKQREEETR and RHEE…EARR. 2 disordered regions span residues 621 to 641 and 800 to 1038; these read ALQRKQREEETRKRIRTQQLQ and RHEE…QQGQ. 2 stretches are compositionally biased toward low complexity: residues 943 to 952 and 976 to 993; these read KEAAGGAAPE and GASAAAPAAPPSNGAAPS. Residues 1002–1019 are compositionally biased toward polar residues; that stretch reads DSGSSTPPSRTQTPATTS.

The protein belongs to the eIF-3 subunit A family. As to quaternary structure, component of the eukaryotic translation initiation factor 3 (eIF-3) complex.

It is found in the cytoplasm. RNA-binding component of the eukaryotic translation initiation factor 3 (eIF-3) complex, which is involved in protein synthesis of a specialized repertoire of mRNAs and, together with other initiation factors, stimulates binding of mRNA and methionyl-tRNAi to the 40S ribosome. The eIF-3 complex specifically targets and initiates translation of a subset of mRNAs involved in cell proliferation. The polypeptide is Eukaryotic translation initiation factor 3 subunit A (tif32) (Aspergillus oryzae (strain ATCC 42149 / RIB 40) (Yellow koji mold)).